The primary structure comprises 96 residues: ESAT-6-like protein EsxR (96 aa).

This sequence belongs to the WXG100 family. ESAT-6 subfamily.

The protein localises to the secreted. The sequence is that of ESAT-6-like protein EsxR from Mycobacterium bovis (strain ATCC BAA-935 / AF2122/97).